Here is a 357-residue protein sequence, read N- to C-terminus: Protein RecA (357 aa).

67–74 contacts ATP; sequence GPESSGKT. The segment at 334–357 is disordered; sequence ELKPAAAGNSHDEDELAGEGKEEF.

The protein belongs to the RecA family.

The protein localises to the cytoplasm. Can catalyze the hydrolysis of ATP in the presence of single-stranded DNA, the ATP-dependent uptake of single-stranded DNA by duplex DNA, and the ATP-dependent hybridization of homologous single-stranded DNAs. It interacts with LexA causing its activation and leading to its autocatalytic cleavage. The protein is Protein RecA of Pectobacterium atrosepticum (strain SCRI 1043 / ATCC BAA-672) (Erwinia carotovora subsp. atroseptica).